A 189-amino-acid polypeptide reads, in one-letter code: Small ribosomal subunit protein uS5 (189 aa).

An S5 DRBM domain is found at 22–85 (FVDKLVAINR…EAAKRDLIFV (64 aa)).

It belongs to the universal ribosomal protein uS5 family. Part of the 30S ribosomal subunit. Contacts proteins S4 and S8.

Functionally, with S4 and S12 plays an important role in translational accuracy. Located at the back of the 30S subunit body where it stabilizes the conformation of the head with respect to the body. This chain is Small ribosomal subunit protein uS5, found in Sinorhizobium medicae (strain WSM419) (Ensifer medicae).